We begin with the raw amino-acid sequence, 472 residues long: 2-oxoglutarate carboxylase small subunit (472 aa).

The 445-residue stretch at 1-445 (MFKKVLVANR…TTRYLEEHPH (445 aa)) folds into the Biotin carboxylation domain. Residues lysine 115 and glutamate 199 each contribute to the ATP site. An ATP-grasp domain is found at 119 to 316 (KEVMKRAGVP…IVKWQIRIAA (198 aa)). Arginine 291 is an active-site residue.

As to quaternary structure, heterohexadecamer of 8 large subunits and 8 small subunits. The cofactor is Mg(2+). It depends on Mn(2+) as a cofactor. Co(2+) serves as cofactor.

It carries out the reaction hydrogencarbonate + 2-oxoglutarate + ATP = (S)-oxalosuccinate + ADP + phosphate + H(+). This is 2-oxoglutarate carboxylase small subunit from Hydrogenobacter thermophilus (strain DSM 6534 / IAM 12695 / TK-6).